We begin with the raw amino-acid sequence, 312 residues long: Ribosomal protein L11 methyltransferase (312 aa).

S-adenosyl-L-methionine contacts are provided by threonine 162, glycine 183, aspartate 205, and asparagine 248.

It belongs to the methyltransferase superfamily. PrmA family.

The protein localises to the cytoplasm. The enzyme catalyses L-lysyl-[protein] + 3 S-adenosyl-L-methionine = N(6),N(6),N(6)-trimethyl-L-lysyl-[protein] + 3 S-adenosyl-L-homocysteine + 3 H(+). In terms of biological role, methylates ribosomal protein L11. The protein is Ribosomal protein L11 methyltransferase of Bacillus cereus (strain ATCC 10987 / NRS 248).